The chain runs to 436 residues: Homeobox protein PKNOX1 (436 aa).

Residues 24 to 49 (LKTEQDPNCSEPDVEGVSPPPVGSQT) form a disordered region. Phosphoserine is present on residues serine 33 and serine 41. The MEIS N-terminal domain maps to 80 to 163 (GSEGTTSASF…MNSETLLSGE (84 aa)). Positions 259–321 (SKNKRGVLPK…NARRRILQPM (63 aa)) form a DNA-binding region, homeobox; TALE-type. Positions 401–436 (AEQSEDDSVDSTGDGGAALAPGHLGGLVLENSDSLQ) are disordered.

This sequence belongs to the TALE/MEIS homeobox family. In terms of assembly, interacts with MN1.

The protein resides in the nucleus. Functionally, activates transcription in the presence of PBX1A and HOXA1. The protein is Homeobox protein PKNOX1 of Bos taurus (Bovine).